The sequence spans 362 residues: E3 ubiquitin-protein ligase TM129 (362 aa).

The Lumenal segment spans residues 1–6 (MESPAV). A helical transmembrane segment spans residues 7-27 (TFTLAYVVFSVCFVFTPNEFH). Residues 28–56 (SAGITVQNLLSGWLGSEDVAFVHYHIRRS) lie on the Cytoplasmic side of the membrane. Residues 57–77 (SATLLAHSLLPMGYFIGMCFA) form a helical membrane-spanning segment. Topologically, residues 78–94 (APEKELYNVHKAADGWK) are lumenal. Residues 95 to 115 (VFVLMAVLLPIATSILAFYWS) traverse the membrane as a helical segment. At 116–362 (QKRWSNHPLA…FCIVDVCIVR (247 aa)) the chain is on the cytoplasmic side. The RING-type; degenerate zinc finger occupies 285–350 (CIGCMQTNAN…SSQVPCPTCR (66 aa)).

The protein belongs to the TMEM129 family. Integral component of ER-resident dislocation complexes.

The protein resides in the endoplasmic reticulum membrane. It carries out the reaction S-ubiquitinyl-[E2 ubiquitin-conjugating enzyme]-L-cysteine + [acceptor protein]-L-lysine = [E2 ubiquitin-conjugating enzyme]-L-cysteine + N(6)-ubiquitinyl-[acceptor protein]-L-lysine.. It participates in protein modification; protein ubiquitination. In terms of biological role, E3 ubiquitin-protein ligase involved in ER-associated protein degradation, preferentially associates with the E2 enzyme UBE2J2. This chain is E3 ubiquitin-protein ligase TM129 (tmem129), found in Xenopus laevis (African clawed frog).